We begin with the raw amino-acid sequence, 188 residues long: Succinate-acetate/proton symporter SatP (188 aa).

Residues 1-13 lie on the Cytoplasmic side of the membrane; it reads MGNTKLANPAPLG. Residues 14-34 traverse the membrane as a helical segment; the sequence is LMGFGMTTILLNLHNVGYFAL. A topological domain (periplasmic) is located at residue Asp-35. The chain crosses the membrane as a helical span at residues 36–56; that stretch reads GIILAMGIFYGGIAQIFAGLL. Topologically, residues 57–63 are cytoplasmic; the sequence is EYKKGNT. A helical transmembrane segment spans residues 64-84; sequence FGLTAFTSYGSFWLTLVAILL. The Periplasmic segment spans residues 85–97; sequence MPKLGLTDAPNAQ. The chain crosses the membrane as a helical span at residues 98-118; the sequence is FLGVYLGLWGVFTLFMFFGTL. The Cytoplasmic segment spans residues 119–122; the sequence is KGAR. The chain crosses the membrane as a helical span at residues 123–143; that stretch reads VLQFVFFSLTVLFALLAIGNI. At 144 to 148 the chain is on the periplasmic side; it reads AGNAA. The helical transmembrane segment at 149-169 threads the bilayer; the sequence is IIHFAGWIGLICGASAIYLAM. Residues 170–188 are Cytoplasmic-facing; it reads GEVLNEQFGRTVLPIGESH.

This sequence belongs to the acetate uptake transporter (AceTr) (TC 2.A.96) family.

It is found in the cell inner membrane. Its function is as follows. Uptake of acetate and succinate. Transport is energetically dependent on the protonmotive force. This chain is Succinate-acetate/proton symporter SatP (satP), found in Escherichia coli O157:H7.